We begin with the raw amino-acid sequence, 409 residues long: Nucleoprotein (409 aa).

2 disordered regions span residues 1 to 64 and 167 to 197; these read MSAG…SNVK and RNSS…VDDD. Positions 30 to 161 are RNA-binding; sequence GTGQASWFQS…NNYRWDFIAL (132 aa). The region spanning 32–157 is the CoV N NTD domain; that stretch reads GQASWFQSLK…GGPDNNYRWD (126 aa). Residues 176–197 show a composition bias toward basic and acidic residues; it reads ENSRPGSRDSSRGRQRSRVDDD. Position 192 is a phosphoserine; by host (serine 192). One can recognise a CoV N CTD domain in the interval 217–333; it reads SKQKANEMAE…ECVDGVGTRP (117 aa). The dimerization stretch occupies residues 228-335; sequence KYHKRAIAPG…VDGVGTRPKD (108 aa). A disulfide bridge connects residues cysteine 322 and cysteine 325. Residues 327-409 form a disordered region; the sequence is DGVGTRPKDD…GEGAFDDINI (83 aa). Positions 332–349 are enriched in basic and acidic residues; it reads RPKDDPTPRSRAASKDRN. Phosphothreonine; by host is present on threonine 374.

This sequence belongs to the gammacoronavirus nucleocapsid protein family. As to quaternary structure, homooligomer. Both monomeric and oligomeric forms interact with RNA. Interacts with protein M. Interacts with NSP3; this interaction serves to tether the genome to the newly translated replicase-transcriptase complex at a very early stage of infection. ADP-ribosylated. The ADP-ribosylation is retained in the virion during infection. Post-translationally, phosphorylated on serine and threonine residues.

Its subcellular location is the virion. It localises to the host endoplasmic reticulum-Golgi intermediate compartment. It is found in the host Golgi apparatus. Packages the positive strand viral genome RNA into a helical ribonucleocapsid (RNP) and plays a fundamental role during virion assembly through its interactions with the viral genome and membrane protein M. Plays an important role in enhancing the efficiency of subgenomic viral RNA transcription as well as viral replication. In Gallus gallus (Chicken), this protein is Nucleoprotein.